Consider the following 86-residue polypeptide: MPKSDIHPTWYPEAKVICNGEVVMTTGATQPEIQVDVWSGNHPFFTGTQKILDTEGRVDRFMRKYGMASSDSSEQKDKSSEEKKES.

The tract at residues 65-86 (YGMASSDSSEQKDKSSEEKKES) is disordered. A compositionally biased stretch (basic and acidic residues) spans 73–86 (SEQKDKSSEEKKES).

Belongs to the bacterial ribosomal protein bL31 family. Type A subfamily. As to quaternary structure, part of the 50S ribosomal subunit.

Binds the 23S rRNA. The chain is Large ribosomal subunit protein bL31 from Prochlorococcus marinus (strain NATL2A).